Here is a 162-residue protein sequence, read N- to C-terminus: UPF0262 protein Pden_1958 (162 aa).

Residues 1–22 form a disordered region; that stretch reads MSQSANRLCRIDIDDSALPPPS.

The protein belongs to the UPF0262 family.

In Paracoccus denitrificans (strain Pd 1222), this protein is UPF0262 protein Pden_1958.